The chain runs to 395 residues: DNA primase small subunit PriS (395 aa).

Residues D95, D97, and D302 contribute to the active site.

Belongs to the eukaryotic-type primase small subunit family. In terms of assembly, heterodimer of a small subunit (PriS) and a large subunit (PriL). It depends on Mg(2+) as a cofactor. The cofactor is Mn(2+).

Functionally, catalytic subunit of DNA primase, an RNA polymerase that catalyzes the synthesis of short RNA molecules used as primers for DNA polymerase during DNA replication. The small subunit contains the primase catalytic core and has DNA synthesis activity on its own. Binding to the large subunit stabilizes and modulates the activity, increasing the rate of DNA synthesis while decreasing the length of the DNA fragments, and conferring RNA synthesis capability. The DNA polymerase activity may enable DNA primase to also catalyze primer extension after primer synthesis. May also play a role in DNA repair. The chain is DNA primase small subunit PriS from Methanothrix thermoacetophila (strain DSM 6194 / JCM 14653 / NBRC 101360 / PT) (Methanosaeta thermophila).